The sequence spans 736 residues: Probable potassium transport system protein Kup 2 (736 aa).

12 helical membrane-spanning segments follow: residues 1–21, 42–62, 84–104, 126–146, 156–176, 204–224, 239–259, 287–307, 334–354, 364–384, 390–410, and 414–434; these read MAIV…LYTA, MLSL…VLIA, GAWL…DSVL, LFDE…VILF, IGKV…IVGV, AAGI…EALY, WPFI…WMLA, AVIL…TGAF, LYIP…LAIF, YGLA…VYLW, VGAI…FIAS, and FLHG…VMYT. 2 disordered regions span residues 649 to 678 and 693 to 736; these read TDTA…DTTS and AEAR…KQKR. Low complexity-rich tracts occupy residues 660 to 677 and 700 to 709; these read PTRA…MDTT and EAAAADAPAE. Basic and acidic residues predominate over residues 710-721; the sequence is QGDKGDKGKAEN.

The protein belongs to the HAK/KUP transporter (TC 2.A.72) family.

The protein resides in the cell membrane. It catalyses the reaction K(+)(in) + H(+)(in) = K(+)(out) + H(+)(out). In terms of biological role, transport of potassium into the cell. Likely operates as a K(+):H(+) symporter. This chain is Probable potassium transport system protein Kup 2, found in Bifidobacterium longum (strain NCC 2705).